Here is a 177-residue protein sequence, read N- to C-terminus: Large ribosomal subunit protein uL6 (177 aa).

This sequence belongs to the universal ribosomal protein uL6 family. Part of the 50S ribosomal subunit.

In terms of biological role, this protein binds to the 23S rRNA, and is important in its secondary structure. It is located near the subunit interface in the base of the L7/L12 stalk, and near the tRNA binding site of the peptidyltransferase center. The polypeptide is Large ribosomal subunit protein uL6 (Bradyrhizobium diazoefficiens (strain JCM 10833 / BCRC 13528 / IAM 13628 / NBRC 14792 / USDA 110)).